The sequence spans 101 residues: Urease subunit beta (101 aa).

Belongs to the urease beta subunit family. In terms of assembly, heterotrimer of UreA (gamma), UreB (beta) and UreC (alpha) subunits. Three heterotrimers associate to form the active enzyme.

It localises to the cytoplasm. It catalyses the reaction urea + 2 H2O + H(+) = hydrogencarbonate + 2 NH4(+). Its pathway is nitrogen metabolism; urea degradation; CO(2) and NH(3) from urea (urease route): step 1/1. This Variovorax paradoxus (strain S110) protein is Urease subunit beta.